Here is a 290-residue protein sequence, read N- to C-terminus: Acetyl-coenzyme A carboxylase carboxyl transferase subunit beta (290 aa).

The CoA carboxyltransferase N-terminal domain occupies 27 to 290 (LWVKCPSCEA…LQRQPADALA (264 aa)). Residues Cys-31, Cys-34, Cys-50, and Cys-53 each contribute to the Zn(2+) site. A C4-type zinc finger spans residues 31-53 (CPSCEAVLYRNDVDANLHVCPKC).

This sequence belongs to the AccD/PCCB family. In terms of assembly, acetyl-CoA carboxylase is a heterohexamer composed of biotin carboxyl carrier protein (AccB), biotin carboxylase (AccC) and two subunits each of ACCase subunit alpha (AccA) and ACCase subunit beta (AccD). Zn(2+) is required as a cofactor.

The protein resides in the cytoplasm. The catalysed reaction is N(6)-carboxybiotinyl-L-lysyl-[protein] + acetyl-CoA = N(6)-biotinyl-L-lysyl-[protein] + malonyl-CoA. The protein operates within lipid metabolism; malonyl-CoA biosynthesis; malonyl-CoA from acetyl-CoA: step 1/1. In terms of biological role, component of the acetyl coenzyme A carboxylase (ACC) complex. Biotin carboxylase (BC) catalyzes the carboxylation of biotin on its carrier protein (BCCP) and then the CO(2) group is transferred by the transcarboxylase to acetyl-CoA to form malonyl-CoA. The protein is Acetyl-coenzyme A carboxylase carboxyl transferase subunit beta of Burkholderia multivorans (strain ATCC 17616 / 249).